A 405-amino-acid chain; its full sequence is Deoxyguanosinetriphosphate triphosphohydrolase-like protein (405 aa).

Positions 75–219 constitute an HD domain; it reads RLTHTIEVAQ…AAIADDIAYN (145 aa).

The protein belongs to the dGTPase family. Type 2 subfamily.

This is Deoxyguanosinetriphosphate triphosphohydrolase-like protein from Rhizobium etli (strain ATCC 51251 / DSM 11541 / JCM 21823 / NBRC 15573 / CFN 42).